Here is a 355-residue protein sequence, read N- to C-terminus: UDP-N-acetylglucosamine--N-acetylmuramyl-(pentapeptide) pyrophosphoryl-undecaprenol N-acetylglucosamine transferase (355 aa).

UDP-N-acetyl-alpha-D-glucosamine is bound by residues 15–17 (TGG), asparagine 127, arginine 163, serine 191, isoleucine 244, 263–268 (ALTVSE), and glutamine 288.

It belongs to the glycosyltransferase 28 family. MurG subfamily.

It is found in the cell inner membrane. It catalyses the reaction di-trans,octa-cis-undecaprenyl diphospho-N-acetyl-alpha-D-muramoyl-L-alanyl-D-glutamyl-meso-2,6-diaminopimeloyl-D-alanyl-D-alanine + UDP-N-acetyl-alpha-D-glucosamine = di-trans,octa-cis-undecaprenyl diphospho-[N-acetyl-alpha-D-glucosaminyl-(1-&gt;4)]-N-acetyl-alpha-D-muramoyl-L-alanyl-D-glutamyl-meso-2,6-diaminopimeloyl-D-alanyl-D-alanine + UDP + H(+). The protein operates within cell wall biogenesis; peptidoglycan biosynthesis. Its function is as follows. Cell wall formation. Catalyzes the transfer of a GlcNAc subunit on undecaprenyl-pyrophosphoryl-MurNAc-pentapeptide (lipid intermediate I) to form undecaprenyl-pyrophosphoryl-MurNAc-(pentapeptide)GlcNAc (lipid intermediate II). This Salmonella paratyphi B (strain ATCC BAA-1250 / SPB7) protein is UDP-N-acetylglucosamine--N-acetylmuramyl-(pentapeptide) pyrophosphoryl-undecaprenol N-acetylglucosamine transferase.